The following is an 86-amino-acid chain: Small ribosomal subunit protein uS17 (86 aa).

It belongs to the universal ribosomal protein uS17 family. Part of the 30S ribosomal subunit.

One of the primary rRNA binding proteins, it binds specifically to the 5'-end of 16S ribosomal RNA. This chain is Small ribosomal subunit protein uS17, found in Chlamydia pneumoniae (Chlamydophila pneumoniae).